The following is a 426-amino-acid chain: Enolase (426 aa).

(2R)-2-phosphoglycerate is bound at residue Gln-165. Catalysis depends on Glu-209, which acts as the Proton donor. Residues Asp-244, Glu-287, and Asp-313 each coordinate Mg(2+). 4 residues coordinate (2R)-2-phosphoglycerate: Lys-338, Arg-367, Ser-368, and Lys-389. Lys-338 functions as the Proton acceptor in the catalytic mechanism.

This sequence belongs to the enolase family. Mg(2+) is required as a cofactor.

The protein resides in the cytoplasm. The protein localises to the secreted. It is found in the cell surface. It carries out the reaction (2R)-2-phosphoglycerate = phosphoenolpyruvate + H2O. Its pathway is carbohydrate degradation; glycolysis; pyruvate from D-glyceraldehyde 3-phosphate: step 4/5. Catalyzes the reversible conversion of 2-phosphoglycerate (2-PG) into phosphoenolpyruvate (PEP). It is essential for the degradation of carbohydrates via glycolysis. This is Enolase from Methanococcus maripaludis (strain DSM 14266 / JCM 13030 / NBRC 101832 / S2 / LL).